A 244-amino-acid polypeptide reads, in one-letter code: Probable transcriptional regulatory protein Aasi_0624 (244 aa).

This sequence belongs to the TACO1 family.

It localises to the cytoplasm. The polypeptide is Probable transcriptional regulatory protein Aasi_0624 (Amoebophilus asiaticus (strain 5a2)).